The primary structure comprises 647 residues: MEGRGPYRIYDPGGSTPLGEVSAAFERLVEENTRLKGKMQGIKMLGELLEESQMEASRLRQKAEELVKDSELSPPTSAPSLVSFDDLAELTGQDTKVQVHPATSTAATTTATATTGNSMEKPEPASKSPSNGASSDFEVVPTEEQNSPETGSHPTNMMDLGPPPPEDSNLKLHLQRLETTLSVCAEEPDHSQLFTHLGRMALEFNRLASKVHKNEQRTSILQTLCEQLRQENEALKAKLDKGLEQRDLAAERLREENTELKKLLMNSSCKEGLCGQPSSPKPEGAGKKGVAGQQQASVMASKVPEAGAFGAAEKKVKLLEQQRMELLEVNKQWDQHFRSMKQQYEQKITELRQKLVDLQKQVTELEAEREQKQRDFDRKLLLAKSKIEMEETDKEQLTAEAKELRQKVRYLQDQLSPLTRQREYQEKEIQRLNKALEEALSIQASPSSPPAAFGSPEGVGGHLRKQELVTQNELLKQQVKIFEEDFQRERSDRERMNEEKEELKKQVEKLQAQVTLTNAQLKTLKEEEKAKEALKQQKRKAKASGERYHMEPHPEHVCGAYPYAYPPMPAMVPHHAYKDWSQIRYPPPPVPMEHPPPHPNSRLFHLPEYTWRPPCAGIRNQSSQVMDPPPDRPAEPESADNDCDGPQ.

Residues 39-72 are a coiled coil; sequence MQGIKMLGELLEESQMEASRLRQKAEELVKDSEL. The segment covering 61 to 71 has biased composition (basic and acidic residues); sequence QKAEELVKDSE. Residues 61 to 168 are disordered; that stretch reads QKAEELVKDS…DLGPPPPEDS (108 aa). At S77 the chain carries Phosphoserine. The interval 95 to 425 is interaction with Nef; sequence TKVQVHPATS…SPLTRQREYQ (331 aa). Residues 102–115 show a composition bias toward low complexity; that stretch reads ATSTAATTTATATT. Polar residues predominate over residues 143–155; it reads EEQNSPETGSHPT. Positions 209–270 form a coiled coil; it reads SKVHKNEQRT…KKLLMNSSCK (62 aa). Phosphoserine occurs at positions 297, 416, and 455. A coiled-coil region spans residues 311 to 551; it reads AAEKKVKLLE…KASGERYHME (241 aa). Residues 444–601 form a required for inhibitory activity of TNF-induced NF-kappa-B activation region; that stretch reads ASPSSPPAAF…MEHPPPHPNS (158 aa). Residues 465–523 form a ubiquitin-binding domain (UBD) region; sequence KQELVTQNELLKQQVKIFEEDFQRERSDRERMNEEKEELKKQVEKLQAQVTLTNAQLKT. The Nuclear localization signal motif lies at 537 to 543; it reads QKRKAKA. Y565 is subject to Phosphotyrosine. R584 is modified (asymmetric dimethylarginine). R612 carries the post-translational modification Asymmetric dimethylarginine; alternate. R612 carries the post-translational modification Omega-N-methylarginine; alternate. Positions 613-647 are disordered; it reads PPCAGIRNQSSQVMDPPPDRPAEPESADNDCDGPQ. A compositionally biased stretch (acidic residues) spans 637-647; it reads ESADNDCDGPQ. At S638 the chain carries Phosphoserine.

Interacts with TNFAIP3 and IKBKG (polyubiquitinated); facilitates TNFAIP3-mediated de-ubiquitination of NEMO/IKBKG. Interacts with polyubiquitin. Interacts with MAPK1, SELPLG and PIK3CD. Interacts with IRAK1 (polyubiquitinated). Interacts with MYD88; the interaction is indicative for participation in an activated TLR-signaling complex. Interacts with TAX1BP1. Phosphorylation at Tyr-565 by SRC-family kinases recruits phosphoinositide-3-kinase (PI3K) PIK3CD:p85 heterodimer which results in integrin activation and leukocyte adhesion to activated endothelium during inflammation. Ubiquitous. Abundant in heart and skeletal muscle and expressed at lower levels in thymus, liver, kidney, brain and intestinal tract.

It is found in the cytoplasm. The protein resides in the nucleus. Inhibits NF-kappa-B activation and TNF-induced NF-kappa-B-dependent gene expression by regulating TAX1BP1 and A20/TNFAIP3-mediated deubiquitination of IKBKG; proposed to link A20/TNFAIP3 to ubiquitinated IKBKG. Involved in regulation of EGF-induced ERK1/ERK2 signaling pathway; blocks MAPK3/MAPK1 nuclear translocation and MAPK1-dependent transcription. Increases cell surface CD4(T4) antigen expression. Involved in the anti-inflammatory response of macrophages and positively regulates TLR-induced activation of CEBPB. Involved in the prevention of autoimmunity; this function implicates binding to polyubiquitin. Involved in leukocyte integrin activation during inflammation; this function is mediated by association with SELPLG and dependent on phosphorylation by SRC-family kinases. This chain is TNFAIP3-interacting protein 1 (Tnip1), found in Mus musculus (Mouse).